Reading from the N-terminus, the 460-residue chain is UDP-N-acetylmuramoylalanine--D-glutamate ligase (460 aa).

Position 115-121 (115-121) interacts with ATP; the sequence is GTNGKTT.

The protein belongs to the MurCDEF family.

It is found in the cytoplasm. The enzyme catalyses UDP-N-acetyl-alpha-D-muramoyl-L-alanine + D-glutamate + ATP = UDP-N-acetyl-alpha-D-muramoyl-L-alanyl-D-glutamate + ADP + phosphate + H(+). It functions in the pathway cell wall biogenesis; peptidoglycan biosynthesis. Functionally, cell wall formation. Catalyzes the addition of glutamate to the nucleotide precursor UDP-N-acetylmuramoyl-L-alanine (UMA). This chain is UDP-N-acetylmuramoylalanine--D-glutamate ligase, found in Salinibacter ruber (strain DSM 13855 / M31).